Here is a 123-residue protein sequence, read N- to C-terminus: Small ribosomal subunit protein uS12 (123 aa).

A disordered region spans residues methionine 1–serine 47. A 3-methylthioaspartic acid modification is found at aspartate 89.

Belongs to the universal ribosomal protein uS12 family. Part of the 30S ribosomal subunit. Contacts proteins S8 and S17. May interact with IF1 in the 30S initiation complex.

In terms of biological role, with S4 and S5 plays an important role in translational accuracy. Functionally, interacts with and stabilizes bases of the 16S rRNA that are involved in tRNA selection in the A site and with the mRNA backbone. Located at the interface of the 30S and 50S subunits, it traverses the body of the 30S subunit contacting proteins on the other side and probably holding the rRNA structure together. The combined cluster of proteins S8, S12 and S17 appears to hold together the shoulder and platform of the 30S subunit. The sequence is that of Small ribosomal subunit protein uS12 from Desulforapulum autotrophicum (strain ATCC 43914 / DSM 3382 / VKM B-1955 / HRM2) (Desulfobacterium autotrophicum).